Reading from the N-terminus, the 956-residue chain is Kinesin heavy chain isoform 5C (956 aa).

The 320-residue stretch at 8-327 (SIKVMCRFRP…LMFGQRAKTI (320 aa)) folds into the Kinesin motor domain. The ATP site is built by Q87, S89, S90, G91, K92, T93, H94, and K99. The segment at 174-315 (VSSPEEVMDV…PSVFNEAETK (142 aa)) is microtubule-binding. T403 is subject to Phosphothreonine. Positions 406–923 (VDGISAEKEK…RRAHSAQIAK (518 aa)) form a coiled coil. Residues 859–956 (CELPKLEKRL…GSSNSTHYQK (98 aa)) are globular. The tract at residues 910–956 (KNMARRAHSAQIAKPIRPGHYPASSPTAVHAVRGGGGGSSNSTHYQK) is disordered.

It belongs to the TRAFAC class myosin-kinesin ATPase superfamily. Kinesin family. Kinesin subfamily. As to quaternary structure, oligomer composed of two heavy chains and two light chains. Interacts with GRIP1. Interacts with KLC3 and TRAK1. Interacts with ZFYVE27.

The protein localises to the cytoplasm. It is found in the cytoskeleton. Its subcellular location is the cell projection. The protein resides in the dendrite. It catalyses the reaction ATP + H2O = ADP + phosphate + H(+). Microtubule-associated force-producing protein that may play a role in organelle transport. Has ATPase activity. Involved in synaptic transmission. Mediates dendritic trafficking of mRNAs. Required for anterograde axonal transportation of MAPK8IP3/JIP3 which is essential for MAPK8IP3/JIP3 function in axon elongation. This chain is Kinesin heavy chain isoform 5C (Kif5c), found in Mus musculus (Mouse).